Reading from the N-terminus, the 548-residue chain is Chaperonin GroEL (548 aa).

ATP is bound by residues 30–33 (TLGP), Lys51, 87–91 (DGTTT), Gly415, 479–481 (NAA), and Asp495. Residues 524-548 (LPKEDKSSDSNSSPAGGMGGMGGMM) form a disordered region. Positions 539–548 (GGMGGMGGMM) are enriched in gly residues.

It belongs to the chaperonin (HSP60) family. As to quaternary structure, forms a cylinder of 14 subunits composed of two heptameric rings stacked back-to-back. Interacts with the co-chaperonin GroES.

The protein resides in the cytoplasm. The enzyme catalyses ATP + H2O + a folded polypeptide = ADP + phosphate + an unfolded polypeptide.. Its function is as follows. Together with its co-chaperonin GroES, plays an essential role in assisting protein folding. The GroEL-GroES system forms a nano-cage that allows encapsulation of the non-native substrate proteins and provides a physical environment optimized to promote and accelerate protein folding. This Buchnera aphidicola subsp. Myzus persicae (Myzus persicae primary endosymbiont) protein is Chaperonin GroEL.